We begin with the raw amino-acid sequence, 393 residues long: Formate-dependent phosphoribosylglycinamide formyltransferase (393 aa).

N(1)-(5-phospho-beta-D-ribosyl)glycinamide-binding positions include 22-23 (EL) and E82. ATP is bound by residues R114, K155, 160 to 165 (SSGHGQ), 195 to 198 (EGFV), and E203. Positions 119-308 (RLAAEELGLP…EFALHARAIL (190 aa)) constitute an ATP-grasp domain. Residues E267 and E279 each contribute to the Mg(2+) site. N(1)-(5-phospho-beta-D-ribosyl)glycinamide contacts are provided by residues D286, K356, and 363 to 364 (RR).

It belongs to the PurK/PurT family. In terms of assembly, homodimer.

The enzyme catalyses N(1)-(5-phospho-beta-D-ribosyl)glycinamide + formate + ATP = N(2)-formyl-N(1)-(5-phospho-beta-D-ribosyl)glycinamide + ADP + phosphate + H(+). Its pathway is purine metabolism; IMP biosynthesis via de novo pathway; N(2)-formyl-N(1)-(5-phospho-D-ribosyl)glycinamide from N(1)-(5-phospho-D-ribosyl)glycinamide (formate route): step 1/1. Functionally, involved in the de novo purine biosynthesis. Catalyzes the transfer of formate to 5-phospho-ribosyl-glycinamide (GAR), producing 5-phospho-ribosyl-N-formylglycinamide (FGAR). Formate is provided by PurU via hydrolysis of 10-formyl-tetrahydrofolate. In Mannheimia succiniciproducens (strain KCTC 0769BP / MBEL55E), this protein is Formate-dependent phosphoribosylglycinamide formyltransferase.